The following is a 448-amino-acid chain: Glutamyl-tRNA reductase (448 aa).

Residues 49-52, S109, 114-116, and Q120 contribute to the substrate site; these read TCNR and ETQ. C50 serves as the catalytic Nucleophile. An NADP(+)-binding site is contributed by 189–194; it reads GAGEMS.

This sequence belongs to the glutamyl-tRNA reductase family. In terms of assembly, homodimer.

It catalyses the reaction (S)-4-amino-5-oxopentanoate + tRNA(Glu) + NADP(+) = L-glutamyl-tRNA(Glu) + NADPH + H(+). It functions in the pathway porphyrin-containing compound metabolism; protoporphyrin-IX biosynthesis; 5-aminolevulinate from L-glutamyl-tRNA(Glu): step 1/2. In terms of biological role, catalyzes the NADPH-dependent reduction of glutamyl-tRNA(Glu) to glutamate 1-semialdehyde (GSA). The polypeptide is Glutamyl-tRNA reductase (Staphylococcus aureus (strain bovine RF122 / ET3-1)).